A 370-amino-acid chain; its full sequence is Elongation factor Ts, mitochondrial (370 aa).

Residues 1–29 constitute a mitochondrion transit peptide; that stretch reads MALLSAAPRALRLPRRLPLGAALPALRAL.

This sequence belongs to the EF-Ts family.

It is found in the mitochondrion. Functionally, associates with the EF-Tu.GDP complex and induces the exchange of GDP to GTP. It remains bound to the aminoacyl-tRNA.EF-Tu.GTP complex up to the GTP hydrolysis stage on the ribosome. This chain is Elongation factor Ts, mitochondrial, found in Cryptococcus neoformans var. neoformans serotype D (strain B-3501A) (Filobasidiella neoformans).